Here is a 599-residue protein sequence, read N- to C-terminus: Elongation factor 4 (599 aa).

One can recognise a tr-type G domain in the interval 2–184 (KHIRNFSIIA…RLVRDIPAPE (183 aa)). GTP contacts are provided by residues 14-19 (DHGKST) and 131-134 (NKID).

It belongs to the TRAFAC class translation factor GTPase superfamily. Classic translation factor GTPase family. LepA subfamily.

It is found in the cell inner membrane. It carries out the reaction GTP + H2O = GDP + phosphate + H(+). Its function is as follows. Required for accurate and efficient protein synthesis under certain stress conditions. May act as a fidelity factor of the translation reaction, by catalyzing a one-codon backward translocation of tRNAs on improperly translocated ribosomes. Back-translocation proceeds from a post-translocation (POST) complex to a pre-translocation (PRE) complex, thus giving elongation factor G a second chance to translocate the tRNAs correctly. Binds to ribosomes in a GTP-dependent manner. This is Elongation factor 4 from Yersinia pestis bv. Antiqua (strain Antiqua).